The primary structure comprises 235 residues: MEEKKPEQDEFGYHLFPERGNGESKKNSILSKSLFSFNHKCQLMLKIALDTSPYAKLLLDAMKQSGCTVYKDRHFSCEECDGSVSGGFDAATSEIVLCQNNIHQQSHMNRVVTHELIHAFDHCRAHVDWFNNVRHLACSEIRAANLSGDCTLANELTRFKFGVKGHHQVCVRDRALRSILAVRNISRETAEKAVDEVFDSCFNDHEPFGRIPHSKADAKFAYRDFQNRDRYYANL.

Position 114 (His114) interacts with a divalent metal cation. Glu115 is a catalytic residue. Position 118 (His118) interacts with a divalent metal cation.

The protein belongs to the peptidase M76 family.

The protein is Mitochondrial inner membrane protease ATP23 homolog (atp23) of Xenopus laevis (African clawed frog).